Reading from the N-terminus, the 541-residue chain is Protein wntless homolog (541 aa).

The N-terminal stretch at 1-42 is a signal peptide; the sequence is MAGAIIENMSTRKLCIVGGILLVFQVIAFLVGGLIAPSPTTA. Topologically, residues 43–232 are lumenal; the sequence is VPYMSVKCID…GIHQNGGFTK (190 aa). A helical transmembrane segment spans residues 233–253; sequence VWFAMKTFLTPSILIIMVWYW. The Cytoplasmic segment spans residues 254-268; it reads RRITLMTRAPVLLEK. Residues 269–289 traverse the membrane as a helical segment; the sequence is VIFALGISMTFINIPVEWFSI. The Lumenal segment spans residues 290-303; sequence GFDWTWMLLFGDIR. Residues 304–324 form a helical membrane-spanning segment; that stretch reads QGIFYAMLLSFWIIFCGEHMM. Topologically, residues 325 to 331 are cytoplasmic; the sequence is DQNERNR. The chain crosses the membrane as a helical span at residues 332–352; it reads LSGYWKQVGPIAVGSFCLFIF. Residues 353-380 are Lumenal-facing; that stretch reads DMCERGVQLKNPFYSIWTTEVGTELAMA. Residues 381 to 401 traverse the membrane as a helical segment; the sequence is FIIVAGICLCLYFLFLCFMVF. The Cytoplasmic segment spans residues 402-431; that stretch reads QVFRNISGKQSSLPAMSKARRLHYEGLIFR. A helical transmembrane segment spans residues 432–452; the sequence is FKFLMLITLACAAMTVIFFIV. Residues 453-471 are Lumenal-facing; it reads SQVTEGHWKWGDITIQVNS. A helical transmembrane segment spans residues 472–492; the sequence is AFFTGIYGMWNLYVFALMFLY. The Cytoplasmic segment spans residues 493–541; the sequence is APSHKNYGEDQSNGDLGVSSGEELQLTTTITHVDGPTEVYKLARKEAQE.

It belongs to the wntless family.

Its subcellular location is the golgi apparatus membrane. It is found in the cytoplasmic vesicle membrane. May play an essential role in Wnt signaling pathway. May be required for Wnt-dependent patterning processes. The sequence is that of Protein wntless homolog (WLS) from Gallus gallus (Chicken).